Reading from the N-terminus, the 268-residue chain is Indole-3-glycerol phosphate synthase (268 aa).

This sequence belongs to the TrpC family.

It catalyses the reaction 1-(2-carboxyphenylamino)-1-deoxy-D-ribulose 5-phosphate + H(+) = (1S,2R)-1-C-(indol-3-yl)glycerol 3-phosphate + CO2 + H2O. It functions in the pathway amino-acid biosynthesis; L-tryptophan biosynthesis; L-tryptophan from chorismate: step 4/5. The chain is Indole-3-glycerol phosphate synthase (trpC) from Acinetobacter baylyi (strain ATCC 33305 / BD413 / ADP1).